We begin with the raw amino-acid sequence, 96 residues long: Large ribosomal subunit protein eL14 (96 aa).

This sequence belongs to the eukaryotic ribosomal protein eL14 family.

This is Large ribosomal subunit protein eL14 from Metallosphaera sedula (strain ATCC 51363 / DSM 5348 / JCM 9185 / NBRC 15509 / TH2).